The chain runs to 78 residues: Chassatide C4 (78 aa).

Positions 1–23 (MAKFATQLFLLTASVVMLEVQSS) are cleaved as a signal peptide. Residues 24–42 (IVIMQDPDLGRKLIMNPAN) constitute a propeptide, removed in mature form. Positions 43-71 (GASCGETCFTGICFTAGCSCNPWPTCTRN) form a cross-link, cyclopeptide (Gly-Asn). Cystine bridges form between C46/C60, C50/C62, and C55/C68. A propeptide spans 72-78 (GLNPESI) (removed in mature form).

In terms of processing, this is a cyclic peptide.

Probably participates in a plant defense mechanism. In Chassalia chartacea (Chassalia curviflora), this protein is Chassatide C4.